A 216-amino-acid chain; its full sequence is Imidazoleglycerol-phosphate dehydratase (216 aa).

It belongs to the imidazoleglycerol-phosphate dehydratase family.

It is found in the cytoplasm. It carries out the reaction D-erythro-1-(imidazol-4-yl)glycerol 3-phosphate = 3-(imidazol-4-yl)-2-oxopropyl phosphate + H2O. It functions in the pathway amino-acid biosynthesis; L-histidine biosynthesis; L-histidine from 5-phospho-alpha-D-ribose 1-diphosphate: step 6/9. The sequence is that of Imidazoleglycerol-phosphate dehydratase from Nocardia farcinica (strain IFM 10152).